A 902-amino-acid polypeptide reads, in one-letter code: Ribonuclease E (902 aa).

Residues 39–119 (SNIYKGKITR…GTKGAALTTF (81 aa)) form the S1 motif domain. Mg(2+) contacts are provided by Asp-303 and Asp-346. The Zn(2+) site is built by Cys-404 and Cys-407. Positions 404–407 (CPRC) are required for zinc-mediated homotetramerization and catalytic activity. Residues 881 to 902 (GKNSAGVHSATNFSNSPVSKLK) are disordered. Residues 889–902 (SATNFSNSPVSKLK) are compositionally biased toward polar residues.

Belongs to the RNase E/G family. RNase E subfamily. Component of the RNA degradosome, which is a multiprotein complex involved in RNA processing and mRNA degradation. Within the RNA degradosome, RNase E assembles into a homotetramer formed by a dimer of dimers. Zn(2+) is required as a cofactor. The cofactor is Mg(2+).

It localises to the cytoplasm. Its subcellular location is the cell inner membrane. The enzyme catalyses Endonucleolytic cleavage of single-stranded RNA in A- and U-rich regions.. In terms of biological role, endoribonuclease that plays a central role in RNA processing and decay. Required for the maturation of 5S and 16S rRNAs and the majority of tRNAs. Also involved in the degradation of most mRNAs. This Buchnera aphidicola subsp. Acyrthosiphon pisum (strain APS) (Acyrthosiphon pisum symbiotic bacterium) protein is Ribonuclease E.